The primary structure comprises 508 residues: Light-independent protochlorophyllide reductase subunit B (508 aa).

Aspartate 36 lines the [4Fe-4S] cluster pocket. Aspartate 294 serves as the catalytic Proton donor. 429–430 contacts substrate; that stretch reads GM.

Belongs to the ChlB/BchB/BchZ family. In terms of assembly, protochlorophyllide reductase is composed of three subunits; ChlL, ChlN and ChlB. Forms a heterotetramer of two ChlB and two ChlN subunits. [4Fe-4S] cluster serves as cofactor.

The catalysed reaction is chlorophyllide a + oxidized 2[4Fe-4S]-[ferredoxin] + 2 ADP + 2 phosphate = protochlorophyllide a + reduced 2[4Fe-4S]-[ferredoxin] + 2 ATP + 2 H2O. It functions in the pathway porphyrin-containing compound metabolism; chlorophyll biosynthesis (light-independent). Its function is as follows. Component of the dark-operative protochlorophyllide reductase (DPOR) that uses Mg-ATP and reduced ferredoxin to reduce ring D of protochlorophyllide (Pchlide) to form chlorophyllide a (Chlide). This reaction is light-independent. The NB-protein (ChlN-ChlB) is the catalytic component of the complex. In Nostoc sp. (strain PCC 7120 / SAG 25.82 / UTEX 2576), this protein is Light-independent protochlorophyllide reductase subunit B.